The following is a 362-amino-acid chain: F-box protein At2g14710 (362 aa).

The region spanning 1-47 is the F-box domain; sequence MAHLKNLPWELIEEILSRVPPKSLVRFRTVSKQWNALFDDKTFINNH.

In Arabidopsis thaliana (Mouse-ear cress), this protein is F-box protein At2g14710.